The following is a 483-amino-acid chain: Regulatory protein ViaA (483 aa).

The protein belongs to the ViaA family. Homodimer. Interacts with RavA.

It localises to the cytoplasm. In terms of biological role, component of the RavA-ViaA chaperone complex, which may act on the membrane to optimize the function of some of the respiratory chains. ViaA stimulates the ATPase activity of RavA. The sequence is that of Regulatory protein ViaA from Escherichia fergusonii (strain ATCC 35469 / DSM 13698 / CCUG 18766 / IAM 14443 / JCM 21226 / LMG 7866 / NBRC 102419 / NCTC 12128 / CDC 0568-73).